Reading from the N-terminus, the 817-residue chain is General transcription factor 3C polypeptide 4 (817 aa).

Met1 bears the N-acetylmethionine mark. The interval 1–40 is disordered; that stretch reads MSEADQALVGPKADEPSPPAEEKDEGGGKEAAADAAPGPS. Lys221 is covalently cross-linked (Glycyl lysine isopeptide (Lys-Gly) (interchain with G-Cter in SUMO2)). Phosphoserine is present on residues Ser600 and Ser607. Residues 603-658 form a disordered region; it reads LLVDSPGMGDGEDEQQEEGTSKQGTKAGLQEKSKEGDTEETPEDSLTAGGDTGGRE. Residue Lys624 forms a Glycyl lysine isopeptide (Lys-Gly) (interchain with G-Cter in SUMO2) linkage. Phosphoserine is present on Ser647.

Belongs to the TFIIIC subunit 4 family. Part of the TFIIIC subcomplex TFIIIC2, consisting of six subunits, GTF3C1, GTF3C2, GTF3C3, GTF3C4, GTF3C5 and GTF3C6. Interacts with BRF1, GTF3C1, GTF3C2, GTF3C5, GTF3C6, POLR3C and POLR3F.

The protein resides in the nucleus. It catalyses the reaction L-lysyl-[protein] + acetyl-CoA = N(6)-acetyl-L-lysyl-[protein] + CoA + H(+). Functionally, essential for RNA polymerase III to make a number of small nuclear and cytoplasmic RNAs, including 5S RNA, tRNA, and adenovirus-associated (VA) RNA of both cellular and viral origin. Has histone acetyltransferase activity (HAT) with unique specificity for free and nucleosomal H3. May cooperate with GTF3C5 in facilitating the recruitment of TFIIIB and RNA polymerase through direct interactions with BRF1, POLR3C and POLR3F. May be localized close to the A box. This Mus musculus (Mouse) protein is General transcription factor 3C polypeptide 4 (Gtf3c4).